Consider the following 552-residue polypeptide: Carotenoid cleavage dioxygenase 8 homolog A, chloroplastic (552 aa).

The N-terminal 43 residues, 1-43 (MATSLTLIATPCTAPRSSSSFALAPRLPPRCSNATAARRRAVR), are a transit peptide targeting the chloroplast. The tract at residues 32-73 (SNATAARRRAVRATTLQSDQEPAGSGDSGATTTKLSASTSVR) is disordered. A compositionally biased stretch (polar residues) spans 59–72 (SGATTTKLSASTSV). 4 residues coordinate Fe cation: His-239, His-289, His-356, and His-543.

This sequence belongs to the carotenoid oxygenase family. Fe(2+) is required as a cofactor. Highly expressed in panicles, inflorescences and parenchyma cells of the root stele, and at lower levels in shoot apex, leaf buds and xylem parenchyma cells of the stem.

It is found in the plastid. The protein localises to the chloroplast. May be involved in strigolactones biosynthesis. This Oryza sativa subsp. japonica (Rice) protein is Carotenoid cleavage dioxygenase 8 homolog A, chloroplastic (CCD8A).